Here is a 387-residue protein sequence, read N- to C-terminus: MKQAVIVDCIRTPMGRSKAGVFRNVRAETLSAELMKGLLLRNPQLDPNTIEDVIWGCVQQTLEQGFNIARNASLLAGIPKTAGAVTVNRLCGSSMEAIHQAARAIMTGMGDTFIIGGVEHMGHVPMNHGVDFHPGLANNVAKASGMMGLTAEMLGKLHGITREQQDAFAVRSHQRAHAATVEGRFAKEIYGIEGHDANGALIKVLHDEVIRPETSMESLAALRPVFDPANGTVTAGTSSALSDGASAMLVMEESKARALGLPIRARIRSMAVAGCDAAIMGYGPVPATQKALARAGITVNDLDVIELNEAFAAQSLPCVKDLGLLDVVEDKINLNGGAIALGHPLGCSGARISTTLINLMEHKDATLGLATMCIGLGQGIATVFERV.

The active-site Acyl-thioester intermediate is Cys91. Active-site proton acceptor residues include His343 and Cys373.

It belongs to the thiolase-like superfamily. Thiolase family. In terms of assembly, heterotetramer of two alpha chains (FadB) and two beta chains (FadA).

It is found in the cytoplasm. The enzyme catalyses an acyl-CoA + acetyl-CoA = a 3-oxoacyl-CoA + CoA. Its pathway is lipid metabolism; fatty acid beta-oxidation. Catalyzes the final step of fatty acid oxidation in which acetyl-CoA is released and the CoA ester of a fatty acid two carbons shorter is formed. The chain is 3-ketoacyl-CoA thiolase from Shewanella sp. (strain ANA-3).